A 173-amino-acid chain; its full sequence is tRNA-specific adenosine deaminase (173 aa).

The CMP/dCMP-type deaminase domain occupies 9–121; it reads EFDEKMMRYA…DYKTGAIGSR (113 aa). Histidine 61 serves as a coordination point for Zn(2+). Glutamate 63 functions as the Proton donor in the catalytic mechanism. Cysteine 91 and cysteine 94 together coordinate Zn(2+).

The protein belongs to the cytidine and deoxycytidylate deaminase family. As to quaternary structure, homodimer. The cofactor is Zn(2+).

The catalysed reaction is adenosine(34) in tRNA + H2O + H(+) = inosine(34) in tRNA + NH4(+). In terms of biological role, catalyzes the deamination of adenosine to inosine at the wobble position 34 of tRNA(Arg2). The polypeptide is tRNA-specific adenosine deaminase (Haemophilus influenzae (strain ATCC 51907 / DSM 11121 / KW20 / Rd)).